Here is a 942-residue protein sequence, read N- to C-terminus: Glutamyl aminopeptidase (942 aa).

Topologically, residues 1–14 (MSTDSKRYCIKTKH) are cytoplasmic. The chain crosses the membrane as a helical; Signal-anchor for type II membrane protein span at residues 15-35 (VAIICAAVVAVGLIVGLSVGL). Over 36-942 (TRSCDSKDGG…RDTIRDWFFN (907 aa)) the chain is Extracellular. Residues 40–74 (DSKDGGQGTTQSPSHLPPTSSPPQDQGVCPASEDE) are disordered. N-linked (GlcNAc...) asparagine glycosylation is found at Asn-110, Asn-114, and Asn-187. Substrate is bound at residue Glu-213. N-linked (GlcNAc...) asparagine glycosylation is present at Asn-314. Residue 347–351 (GAMEN) participates in substrate binding. Residue Asn-367 is glycosylated (N-linked (GlcNAc...) asparagine). His-383 contacts Zn(2+). Glu-384 functions as the Proton acceptor in the catalytic mechanism. Zn(2+) is bound by residues His-387 and Glu-406. 9 N-linked (GlcNAc...) asparagine glycosylation sites follow: Asn-557, Asn-579, Asn-587, Asn-597, Asn-632, Asn-668, Asn-753, Asn-786, and Asn-791. Residue Arg-877 participates in substrate binding.

The protein belongs to the peptidase M1 family. Homodimer; disulfide-linked. Zn(2+) is required as a cofactor.

The protein localises to the cell membrane. The enzyme catalyses Release of N-terminal glutamate (and to a lesser extent aspartate) from a peptide.. Its activity is regulated as follows. Substrate specificity is modulated by calcium which enhances the enzymatic activity for cleavage of acidic residues while reducing its activity with basic residues. Inhibited by aminopeptidase inhibitors amastatin and bestatin. Functionally, regulates central hypertension through its calcium-modulated preference to cleave N-terminal acidic residues from peptides such as angiotensin II. The sequence is that of Glutamyl aminopeptidase (ENPEP) from Sus scrofa (Pig).